A 317-amino-acid polypeptide reads, in one-letter code: Acetyl-coenzyme A carboxylase carboxyl transferase subunit alpha (317 aa).

Residues 39 to 293 form the CoA carboxyltransferase C-terminal domain; the sequence is RLETKAREAL…GDAIADALSQ (255 aa).

It belongs to the AccA family. Acetyl-CoA carboxylase is a heterohexamer composed of biotin carboxyl carrier protein (AccB), biotin carboxylase (AccC) and two subunits each of ACCase subunit alpha (AccA) and ACCase subunit beta (AccD).

The protein localises to the cytoplasm. The catalysed reaction is N(6)-carboxybiotinyl-L-lysyl-[protein] + acetyl-CoA = N(6)-biotinyl-L-lysyl-[protein] + malonyl-CoA. The protein operates within lipid metabolism; malonyl-CoA biosynthesis; malonyl-CoA from acetyl-CoA: step 1/1. Its function is as follows. Component of the acetyl coenzyme A carboxylase (ACC) complex. First, biotin carboxylase catalyzes the carboxylation of biotin on its carrier protein (BCCP) and then the CO(2) group is transferred by the carboxyltransferase to acetyl-CoA to form malonyl-CoA. The chain is Acetyl-coenzyme A carboxylase carboxyl transferase subunit alpha from Xanthobacter autotrophicus (strain ATCC BAA-1158 / Py2).